Reading from the N-terminus, the 295-residue chain is Aspartate carbamoyltransferase catalytic subunit (295 aa).

2 residues coordinate carbamoyl phosphate: Arg-49 and Thr-50. Residue Lys-77 coordinates L-aspartate. The carbamoyl phosphate site is built by Arg-99, His-127, and Gln-130. Residues Arg-161 and Arg-212 each contribute to the L-aspartate site. The carbamoyl phosphate site is built by Gly-251 and Pro-252.

The protein belongs to the aspartate/ornithine carbamoyltransferase superfamily. ATCase family. Heterododecamer (2C3:3R2) of six catalytic PyrB chains organized as two trimers (C3), and six regulatory PyrI chains organized as three dimers (R2).

It carries out the reaction carbamoyl phosphate + L-aspartate = N-carbamoyl-L-aspartate + phosphate + H(+). Its pathway is pyrimidine metabolism; UMP biosynthesis via de novo pathway; (S)-dihydroorotate from bicarbonate: step 2/3. Catalyzes the condensation of carbamoyl phosphate and aspartate to form carbamoyl aspartate and inorganic phosphate, the committed step in the de novo pyrimidine nucleotide biosynthesis pathway. In Campylobacter jejuni subsp. jejuni serotype O:2 (strain ATCC 700819 / NCTC 11168), this protein is Aspartate carbamoyltransferase catalytic subunit.